Consider the following 189-residue polypeptide: Elongation factor P (189 aa).

This sequence belongs to the elongation factor P family.

The protein resides in the cytoplasm. It functions in the pathway protein biosynthesis; polypeptide chain elongation. Its function is as follows. Involved in peptide bond synthesis. Stimulates efficient translation and peptide-bond synthesis on native or reconstituted 70S ribosomes in vitro. Probably functions indirectly by altering the affinity of the ribosome for aminoacyl-tRNA, thus increasing their reactivity as acceptors for peptidyl transferase. In Pseudomonas entomophila (strain L48), this protein is Elongation factor P.